Consider the following 128-residue polypeptide: Fluoride-specific ion channel FluC (128 aa).

The next 4 membrane-spanning stretches (helical) occupy residues 4 to 24 (VMGIIAVALGGAVGSLARYAI), 37 to 57 (FGTFIANLAGCLFIGLLWSFF), 65 to 85 (TFRLFLFTGLLGGLTTFSTFS), and 101 to 121 (FGYLFLSISLGLAMVAVGFFI). Na(+) contacts are provided by Gly-76 and Thr-79.

Belongs to the fluoride channel Fluc/FEX (TC 1.A.43) family.

It localises to the cell inner membrane. The catalysed reaction is fluoride(in) = fluoride(out). Its activity is regulated as follows. Na(+) is not transported, but it plays an essential structural role and its presence is essential for fluoride channel function. In terms of biological role, fluoride-specific ion channel. Important for reducing fluoride concentration in the cell, thus reducing its toxicity. The protein is Fluoride-specific ion channel FluC of Desulfotalea psychrophila (strain LSv54 / DSM 12343).